Reading from the N-terminus, the 179-residue chain is Large ribosomal subunit protein uL5 (179 aa).

It belongs to the universal ribosomal protein uL5 family. As to quaternary structure, part of the 50S ribosomal subunit; part of the 5S rRNA/L5/L18/L25 subcomplex. Contacts the 5S rRNA and the P site tRNA. Forms a bridge to the 30S subunit in the 70S ribosome.

In terms of biological role, this is one of the proteins that bind and probably mediate the attachment of the 5S RNA into the large ribosomal subunit, where it forms part of the central protuberance. In the 70S ribosome it contacts protein S13 of the 30S subunit (bridge B1b), connecting the 2 subunits; this bridge is implicated in subunit movement. Contacts the P site tRNA; the 5S rRNA and some of its associated proteins might help stabilize positioning of ribosome-bound tRNAs. The chain is Large ribosomal subunit protein uL5 from Sodalis glossinidius (strain morsitans).